A 340-amino-acid chain; its full sequence is Uridine nucleosidase (340 aa).

Residue His254 is part of the active site.

Belongs to the IUNH family.

It is found in the cytoplasm. Its subcellular location is the nucleus. The catalysed reaction is uridine + H2O = D-ribose + uracil. Functionally, also acts on cytidine. The sequence is that of Uridine nucleosidase (URH1) from Saccharomyces cerevisiae (strain ATCC 204508 / S288c) (Baker's yeast).